Consider the following 318-residue polypeptide: L-lactate dehydrogenase (318 aa).

Residues V18, D39, K44, Y69, and 83-84 contribute to the NAD(+) site; that span reads GA. Substrate-binding residues include Q86 and R92. NAD(+) contacts are provided by residues S105, 122–124, and S147; that span reads VSN. A substrate-binding site is contributed by 124 to 127; the sequence is NPVD. 152–155 is a substrate binding site; sequence DTSR. Catalysis depends on H179, which acts as the Proton acceptor. The residue at position 225 (Y225) is a Phosphotyrosine. T234 serves as a coordination point for substrate.

It belongs to the LDH/MDH superfamily. LDH family. In terms of assembly, homotetramer.

It localises to the cytoplasm. It carries out the reaction (S)-lactate + NAD(+) = pyruvate + NADH + H(+). Its pathway is fermentation; pyruvate fermentation to lactate; (S)-lactate from pyruvate: step 1/1. Its function is as follows. Catalyzes the conversion of lactate to pyruvate. The chain is L-lactate dehydrogenase from Clostridium botulinum (strain Kyoto / Type A2).